The sequence spans 439 residues: Glutamate--tRNA ligase 2 (439 aa).

Positions 6-16 (PSPTGDMHIGN) match the 'HIGH' region motif. The 'KMSKS' region signature appears at 232–236 (KMSKR). An ATP-binding site is contributed by Lys-235.

It belongs to the class-I aminoacyl-tRNA synthetase family. Glutamate--tRNA ligase type 1 subfamily. As to quaternary structure, monomer.

The protein resides in the cytoplasm. The enzyme catalyses tRNA(Glu) + L-glutamate + ATP = L-glutamyl-tRNA(Glu) + AMP + diphosphate. Functionally, catalyzes the attachment of glutamate to tRNA(Glu) in a two-step reaction: glutamate is first activated by ATP to form Glu-AMP and then transferred to the acceptor end of tRNA(Glu). In Helicobacter pylori (strain Shi470), this protein is Glutamate--tRNA ligase 2.